The primary structure comprises 92 residues: Small ribosomal subunit protein uS19c (92 aa).

This sequence belongs to the universal ribosomal protein uS19 family.

The protein localises to the plastid. The protein resides in the cyanelle. Functionally, protein S19 forms a complex with S13 that binds strongly to the 16S ribosomal RNA. The chain is Small ribosomal subunit protein uS19c (rps19) from Cyanophora paradoxa.